A 316-amino-acid chain; its full sequence is Probable cell division protein WhiA (316 aa).

The H-T-H motif DNA-binding region spans 276–309; sequence SLEELGKIAEPQITKDAIAGRIRRLLQLAEKTEK.

It belongs to the WhiA family.

Involved in cell division and chromosome segregation. In Bifidobacterium longum (strain NCC 2705), this protein is Probable cell division protein WhiA.